Consider the following 158-residue polypeptide: Globin CTT-I/CTT-IA (158 aa).

An N-terminal signal peptide occupies residues 1–15 (MKFLILALCVAAAMA). One can recognise a Globin domain in the interval 16 to 158 (GPSGDQIAAA…FVFSTLKNEL (143 aa)). Heme b contacts are provided by His-74 and His-109.

The protein belongs to the globin family. Monomer.

The polypeptide is Globin CTT-I/CTT-IA (CTT-1) (Chironomus thummi thummi (Midge)).